The following is a 347-amino-acid chain: Heat-inducible transcription repressor HrcA (347 aa).

It belongs to the HrcA family.

Functionally, negative regulator of class I heat shock genes (grpE-dnaK-dnaJ and groELS operons). Prevents heat-shock induction of these operons. This chain is Heat-inducible transcription repressor HrcA, found in Sphingopyxis alaskensis (strain DSM 13593 / LMG 18877 / RB2256) (Sphingomonas alaskensis).